A 426-amino-acid chain; its full sequence is Serine--tRNA ligase (426 aa).

Residue 230 to 232 (TSE) coordinates L-serine. 261–263 (RKE) serves as a coordination point for ATP. Residue E284 coordinates L-serine. 348 to 351 (EISS) contributes to the ATP binding site. Position 385 (S385) interacts with L-serine.

It belongs to the class-II aminoacyl-tRNA synthetase family. Type-1 seryl-tRNA synthetase subfamily. As to quaternary structure, homodimer. The tRNA molecule binds across the dimer.

It is found in the cytoplasm. It catalyses the reaction tRNA(Ser) + L-serine + ATP = L-seryl-tRNA(Ser) + AMP + diphosphate + H(+). The catalysed reaction is tRNA(Sec) + L-serine + ATP = L-seryl-tRNA(Sec) + AMP + diphosphate + H(+). It participates in aminoacyl-tRNA biosynthesis; selenocysteinyl-tRNA(Sec) biosynthesis; L-seryl-tRNA(Sec) from L-serine and tRNA(Sec): step 1/1. Catalyzes the attachment of serine to tRNA(Ser). Is also able to aminoacylate tRNA(Sec) with serine, to form the misacylated tRNA L-seryl-tRNA(Sec), which will be further converted into selenocysteinyl-tRNA(Sec). In Wolbachia pipientis subsp. Culex pipiens (strain wPip), this protein is Serine--tRNA ligase.